Consider the following 120-residue polypeptide: U13-lycotoxin-Ls1d (120 aa).

An N-terminal signal peptide occupies residues 1 to 16; the sequence is MKILFVLISILYAVYC. A propeptide spanning residues 17–54 is cleaved from the precursor; it reads FSSEEDVDSAYLANELEPVEDINSEQYAALEPKEEQER. 4 disulfide bridges follow: cysteine 56–cysteine 70, cysteine 63–cysteine 76, cysteine 69–cysteine 87, and cysteine 78–cysteine 85. In terms of domain architecture, Agouti spans 56-95; the sequence is CADMGQDCKDDCDCCLNIATCNCRFGRYFCSCTFGDYQTC.

The protein belongs to the neurotoxin 05 (agouti) family. Contains 6 disulfide bonds. Expressed by the venom gland.

It localises to the secreted. The protein is U13-lycotoxin-Ls1d of Lycosa singoriensis (Wolf spider).